The sequence spans 350 residues: Ookinete surface protein PIMMS43 (350 aa).

The N-terminal stretch at 1-24 is a signal peptide; that stretch reads MIKLCTFLSLFLIFFFLNLNAING. The helical transmembrane segment at 330 to 350 threads the bilayer; the sequence is NSIASKLMSVFVFIAVIIYIL.

In terms of assembly, forms multimers, perhaps with an unknown protein(s).

Its subcellular location is the membrane. In terms of biological role, involved in ookinete evasion of the mosquito complement-like response, oocyst maturation, sporozoite development and infectivity. The chain is Ookinete surface protein PIMMS43 from Plasmodium berghei (strain Anka).